A 307-amino-acid polypeptide reads, in one-letter code: UDP-N-acetylenolpyruvoylglucosamine reductase (307 aa).

An FAD-binding PCMH-type domain is found at 33–197 (TGGNADFYIT…LEAAFTLAPG (165 aa)). The active site involves Arg176. Ser226 functions as the Proton donor in the catalytic mechanism. Residue Glu296 is part of the active site.

It belongs to the MurB family. FAD serves as cofactor.

Its subcellular location is the cytoplasm. The catalysed reaction is UDP-N-acetyl-alpha-D-muramate + NADP(+) = UDP-N-acetyl-3-O-(1-carboxyvinyl)-alpha-D-glucosamine + NADPH + H(+). It participates in cell wall biogenesis; peptidoglycan biosynthesis. In terms of biological role, cell wall formation. The sequence is that of UDP-N-acetylenolpyruvoylglucosamine reductase from Staphylococcus aureus (strain NCTC 8325 / PS 47).